A 67-amino-acid polypeptide reads, in one-letter code: Small ribosomal subunit protein bS21 (67 aa).

It belongs to the bacterial ribosomal protein bS21 family.

The protein is Small ribosomal subunit protein bS21 (rpsU) of Aquifex aeolicus (strain VF5).